A 175-amino-acid polypeptide reads, in one-letter code: Protein FanH (175 aa).

An N-terminal signal peptide occupies residues 1-20 (MIKKVPVLLFFMASISITHA). An intrachain disulfide couples Cys39 to Cys77.

It localises to the fimbrium. Functionally, involved in the biosynthesis of K99 fimbriae. The sequence is that of Protein FanH (fanH) from Escherichia coli.